The chain runs to 169 residues: Neudesin (169 aa).

A signal peptide spans 1 to 28 (MAGPAPGRRLVALALIVALAVGLPTAGA). The Cytochrome b5 heme-binding domain maps to 41–126 (VRLFTEEELA…EELESLDDVF (86 aa)). Lysine 133 carries the N6-acetyllysine modification. The disordered stretch occupies residues 148–169 (DGSPNLDFKPEDQPHFDIKDEF). Over residues 155 to 169 (FKPEDQPHFDIKDEF) the composition is skewed to basic and acidic residues.

The protein belongs to the cytochrome b5 family. MAPR subfamily. Interacts with PINK1 and PARK7.

It is found in the secreted. The protein localises to the extracellular space. Its subcellular location is the mitochondrion. The protein resides in the endoplasmic reticulum. Functionally, acts as a neurotrophic factor in postnatal mature neurons enhancing neuronal survival. Promotes cell proliferation and neurogenesis in undifferentiated neural progenitor cells at the embryonic stage and inhibits differentiation of astrocytes. Its neurotrophic activity is exerted via MAPK1/ERK2, MAPK3/ERK1 and AKT1/AKT pathways. Neurotrophic activity is enhanced by binding to heme. Also acts as an anorexigenic neurotrophic factor that contributes to energy balance. This is Neudesin (NENF) from Bos taurus (Bovine).